The following is a 630-amino-acid chain: A disintegrin and metalloproteinase with thrombospondin motifs 4 (630 aa).

Residues 1–5 (RRTKR) constitute a propeptide that is removed on maturation. The 211-residue stretch at 11–221 (RFVETLVVAD…GYGHCLLDKP (211 aa)) folds into the Peptidase M12B domain. 11 cysteine pairs are disulfide-bonded: cysteine 86-cysteine 138, cysteine 115-cysteine 120, cysteine 132-cysteine 216, cysteine 170-cysteine 200, cysteine 242-cysteine 265, cysteine 253-cysteine 275, cysteine 260-cysteine 294, cysteine 288-cysteine 299, cysteine 325-cysteine 362, cysteine 329-cysteine 367, and cysteine 340-cysteine 352. Asparagine 96 carries N-linked (GlcNAc...) asparagine glycosylation. Histidine 154 contacts Zn(2+). Residue glutamate 155 is part of the active site. Histidine 158 and histidine 164 together coordinate Zn(2+). Positions 233–303 (GKDYDADRQC…CMGGRCLHVD (71 aa)) constitute a Disintegrin domain. Positions 313–368 (AGGWGPWGPWGDCSRTCGGGVQFSSRDCTKPVPRNGGKYCEGRRTPFRSCNTKNCP) constitute a TSP type-1 domain. Asparagine 474 carries N-linked (GlcNAc...) asparagine glycosylation. The segment at 479–630 (SKQSGSFKKF…LRKRTWAGRK (152 aa)) is spacer.

Interacts with SRPX2. It depends on Zn(2+) as a cofactor. Post-translationally, the precursor is cleaved by a furin endopeptidase. In terms of processing, glycosylated. Can be O-fucosylated by POFUT2 on a serine or a threonine residue found within the consensus sequence C1-X(2)-(S/T)-C2-G of the TSP type-1 repeat domains where C1 and C2 are the first and second cysteine residue of the repeat, respectively. Fucosylated repeats can then be further glycosylated by the addition of a beta-1,3-glucose residue by the glucosyltransferase, B3GALTL. Fucosylation mediates the efficient secretion of ADAMTS family members. Can also be C-glycosylated with one or two mannose molecules on tryptophan residues within the consensus sequence W-X-X-W of the TPRs, and N-glycosylated. These other glycosylations can also facilitate secretion. Brain specific.

It is found in the secreted. The protein localises to the extracellular space. It localises to the extracellular matrix. The catalysed reaction is Glutamyl endopeptidase. Bonds cleaved include 370-Thr-Glu-Gly-Glu-|-Ala-Arg-Gly-Ser-377 in the interglobular domain of mammalian aggrecan.. Cleaves aggrecan, a cartilage proteoglycan, at the '392-Glu-|-Ala-393' site and may be involved in its turnover. Also cleaves COMP. May play an important role in the destruction of aggrecan in arthritic diseases. The polypeptide is A disintegrin and metalloproteinase with thrombospondin motifs 4 (Adamts4) (Rattus norvegicus (Rat)).